Here is a 351-residue protein sequence, read N- to C-terminus: Probable dual-specificity RNA methyltransferase RlmN (351 aa).

The active-site Proton acceptor is E98. Residues 104 to 332 enclose the Radical SAM core domain; sequence TQKRLTVCVS…ASIRRSRGLD (229 aa). C111 and C337 form a disulfide bridge. 3 residues coordinate [4Fe-4S] cluster: C118, C122, and C125. S-adenosyl-L-methionine contacts are provided by residues 165–166, S195, 218–220, and N294; these read GE and SLH. Catalysis depends on C337, which acts as the S-methylcysteine intermediate.

It belongs to the radical SAM superfamily. RlmN family. [4Fe-4S] cluster serves as cofactor.

The protein localises to the cytoplasm. It carries out the reaction adenosine(2503) in 23S rRNA + 2 reduced [2Fe-2S]-[ferredoxin] + 2 S-adenosyl-L-methionine = 2-methyladenosine(2503) in 23S rRNA + 5'-deoxyadenosine + L-methionine + 2 oxidized [2Fe-2S]-[ferredoxin] + S-adenosyl-L-homocysteine. The catalysed reaction is adenosine(37) in tRNA + 2 reduced [2Fe-2S]-[ferredoxin] + 2 S-adenosyl-L-methionine = 2-methyladenosine(37) in tRNA + 5'-deoxyadenosine + L-methionine + 2 oxidized [2Fe-2S]-[ferredoxin] + S-adenosyl-L-homocysteine. Specifically methylates position 2 of adenine 2503 in 23S rRNA and position 2 of adenine 37 in tRNAs. The sequence is that of Probable dual-specificity RNA methyltransferase RlmN from Acaryochloris marina (strain MBIC 11017).